The chain runs to 130 residues: Large ribosomal subunit protein uL22 (130 aa).

It belongs to the universal ribosomal protein uL22 family. Part of the 50S ribosomal subunit.

Functionally, this protein binds specifically to 23S rRNA; its binding is stimulated by other ribosomal proteins, e.g. L4, L17, and L20. It is important during the early stages of 50S assembly. It makes multiple contacts with different domains of the 23S rRNA in the assembled 50S subunit and ribosome. The globular domain of the protein is located near the polypeptide exit tunnel on the outside of the subunit, while an extended beta-hairpin is found that lines the wall of the exit tunnel in the center of the 70S ribosome. In Clavibacter sepedonicus (Clavibacter michiganensis subsp. sepedonicus), this protein is Large ribosomal subunit protein uL22.